The following is a 276-amino-acid chain: 4-deoxy-L-threo-5-hexosulose-uronate ketol-isomerase 2 (276 aa).

4 residues coordinate Zn(2+): histidine 194, histidine 196, glutamate 201, and histidine 243.

The protein belongs to the KduI family. Zn(2+) serves as cofactor.

The enzyme catalyses 5-dehydro-4-deoxy-D-glucuronate = 3-deoxy-D-glycero-2,5-hexodiulosonate. Its pathway is glycan metabolism; pectin degradation; 2-dehydro-3-deoxy-D-gluconate from pectin: step 4/5. Catalyzes the isomerization of 5-dehydro-4-deoxy-D-glucuronate to 3-deoxy-D-glycero-2,5-hexodiulosonate. The chain is 4-deoxy-L-threo-5-hexosulose-uronate ketol-isomerase 2 (kduI2) from Enterococcus faecalis (strain ATCC 700802 / V583).